The following is a 31-amino-acid chain: GVIPCGESCVFIPCISSVVGCSCKNKVCYRN.

The segment at residues 1 to 31 (GVIPCGESCVFIPCISSVVGCSCKNKVCYRN) is a cross-link (cyclopeptide (Gly-Asn)). Cystine bridges form between Cys-5–Cys-21, Cys-9–Cys-23, and Cys-14–Cys-28.

This is a cyclic peptide. As to expression, expressed in pedicel, root and stem but not in leaf and fruit (at protein level).

Probably participates in a plant defense mechanism. This chain is Chassatide C5, found in Chassalia chartacea (Chassalia curviflora).